Consider the following 472-residue polypeptide: 3-isopropylmalate dehydratase large subunit (472 aa).

Residues Cys353, Cys414, and Cys417 each coordinate [4Fe-4S] cluster.

The protein belongs to the aconitase/IPM isomerase family. LeuC type 1 subfamily. As to quaternary structure, heterodimer of LeuC and LeuD. The cofactor is [4Fe-4S] cluster.

It carries out the reaction (2R,3S)-3-isopropylmalate = (2S)-2-isopropylmalate. It participates in amino-acid biosynthesis; L-leucine biosynthesis; L-leucine from 3-methyl-2-oxobutanoate: step 2/4. Its function is as follows. Catalyzes the isomerization between 2-isopropylmalate and 3-isopropylmalate, via the formation of 2-isopropylmaleate. This chain is 3-isopropylmalate dehydratase large subunit, found in Psychrobacter arcticus (strain DSM 17307 / VKM B-2377 / 273-4).